Here is a 48-residue protein sequence, read N- to C-terminus: Gas vesicle protein A (48 aa).

Belongs to the gas vesicle GvpA family. As to quaternary structure, the gas vesicle shell is 2 nm thick and consists of a single layer of this protein. It forms helical ribs nearly perpendicular to the long axis of the vesicle.

It is found in the gas vesicle shell. Its function is as follows. Gas vesicles are hollow, gas filled proteinaceous nanostructures found in some microorganisms. During planktonic growth they allow positioning of the organism at a favorable depth for light or nutrient acquisition. GvpA forms the protein shell. The sequence is that of Gas vesicle protein A from Spirulina sp. (strain CCAP 1475/10).